A 268-amino-acid polypeptide reads, in one-letter code: Thiazole synthase (268 aa).

Residue K96 is the Schiff-base intermediate with DXP of the active site. Residues G157, 185–186, and 207–208 each bind 1-deoxy-D-xylulose 5-phosphate; these read AG and NT. The segment at 238 to 268 is disordered; sequence PMRPREAASPSSPVEGVPFTPTGPRPGRGPQ. Pro residues predominate over residues 258–268; the sequence is PTGPRPGRGPQ.

This sequence belongs to the ThiG family. As to quaternary structure, homotetramer. Forms heterodimers with either ThiH or ThiS.

The protein resides in the cytoplasm. It carries out the reaction [ThiS sulfur-carrier protein]-C-terminal-Gly-aminoethanethioate + 2-iminoacetate + 1-deoxy-D-xylulose 5-phosphate = [ThiS sulfur-carrier protein]-C-terminal Gly-Gly + 2-[(2R,5Z)-2-carboxy-4-methylthiazol-5(2H)-ylidene]ethyl phosphate + 2 H2O + H(+). It participates in cofactor biosynthesis; thiamine diphosphate biosynthesis. Its function is as follows. Catalyzes the rearrangement of 1-deoxy-D-xylulose 5-phosphate (DXP) to produce the thiazole phosphate moiety of thiamine. Sulfur is provided by the thiocarboxylate moiety of the carrier protein ThiS. In vitro, sulfur can be provided by H(2)S. The chain is Thiazole synthase from Thermus thermophilus (strain ATCC 27634 / DSM 579 / HB8).